The sequence spans 538 residues: Phosphoenolpyruvate carboxykinase (ATP) (538 aa).

Substrate contacts are provided by arginine 64, tyrosine 205, and lysine 211. ATP-binding positions include lysine 211, histidine 230, and 246 to 254; that span reads GLSGTGKTT. Mn(2+) is bound by residues lysine 211 and histidine 230. Residue aspartate 267 participates in Mn(2+) binding. Residues glutamate 295, arginine 331, 447–448, and threonine 453 contribute to the ATP site; that span reads RI. Position 331 (arginine 331) interacts with substrate.

This sequence belongs to the phosphoenolpyruvate carboxykinase (ATP) family. Monomer. The cofactor is Mn(2+).

The protein resides in the cytoplasm. It catalyses the reaction oxaloacetate + ATP = phosphoenolpyruvate + ADP + CO2. The protein operates within carbohydrate biosynthesis; gluconeogenesis. Its function is as follows. Involved in the gluconeogenesis. Catalyzes the conversion of oxaloacetate (OAA) to phosphoenolpyruvate (PEP) through direct phosphoryl transfer between the nucleoside triphosphate and OAA. The polypeptide is Phosphoenolpyruvate carboxykinase (ATP) (Haemophilus influenzae (strain 86-028NP)).